Consider the following 207-residue polypeptide: Cytochrome c oxidase subunit 3 (207 aa).

Helical transmembrane passes span 30-50 (FWLF…TFLA), 67-87 (VTLV…SVYA), 101-121 (LWLG…IYEF), 144-164 (LVGT…TLMI), and 186-206 (WHFI…MGMV).

Belongs to the cytochrome c oxidase subunit 3 family.

It localises to the cell membrane. The enzyme catalyses 4 Fe(II)-[cytochrome c] + O2 + 8 H(+)(in) = 4 Fe(III)-[cytochrome c] + 2 H2O + 4 H(+)(out). In Bacillus subtilis (strain 168), this protein is Cytochrome c oxidase subunit 3 (ctaE).